The following is a 183-amino-acid chain: Ribosome rescue factor SmrB (183 aa).

The Smr domain occupies 98–173; sequence LDLHGLTQLQ…GDAALLVLIE (76 aa).

This sequence belongs to the SmrB family. Associates with collided ribosomes, but not with correctly translating polysomes.

Acts as a ribosome collision sensor. Detects stalled/collided disomes (pairs of ribosomes where the leading ribosome is stalled and a second ribosome has collided with it) and endonucleolytically cleaves mRNA at the 5' boundary of the stalled ribosome. Stalled/collided disomes form a new interface (primarily via the 30S subunits) that binds SmrB. Cleaved mRNA becomes available for tmRNA ligation, leading to ribosomal subunit dissociation and rescue of stalled ribosomes. This is Ribosome rescue factor SmrB from Escherichia coli O17:K52:H18 (strain UMN026 / ExPEC).